We begin with the raw amino-acid sequence, 298 residues long: uncharacterized protein (298 aa).

Active-site charge relay system residues include Thr43 and Tyr105. Residue Tyr131 is the Proton donor of the active site. The Schiff-base intermediate with substrate role is filled by Lys159.

This sequence belongs to the DapA family. Homotetramer.

It is found in the cytoplasm. This is an uncharacterized protein from Pyrococcus furiosus (strain ATCC 43587 / DSM 3638 / JCM 8422 / Vc1).